A 269-amino-acid chain; its full sequence is RBPJ-interacting and tubulin-associated protein 1 (269 aa).

The Nuclear export signal motif lies at 5–17 (VELAVSGMQTLGL). 2 disordered regions span residues 66 to 105 (VGKEASKALGAKGSCETTPSRGSTPTLTPRKKNKYRPISH) and 141 to 269 (LWTP…PPWK). The segment covering 80-92 (CETTPSRGSTPTL) has biased composition (polar residues). The Nuclear localization signal motif lies at 92–108 (LTPRKKNKYRPISHTPS). Residues 128–156 (RMAKGDAAKLRALLWTPPPTPRGSHSPRP) are interaction with RBPJ/RBPSUH. An interaction with tubulin region spans residues 156 to 269 (PREAPLRAIH…ATQKPKPPWK (114 aa)). Over residues 200–253 (HSLTHLNVPSTGHPATSAPHTNGPQDLRPSTSGVTFRSPLVTSRARSVSISVPS) the composition is skewed to polar residues.

It belongs to the RITA family. As to quaternary structure, interacts with RBPJ/RBPSUH.

It is found in the cytoplasm. Its subcellular location is the nucleus. The protein localises to the cytoskeleton. The protein resides in the microtubule organizing center. It localises to the centrosome. Tubulin-binding protein that acts as a negative regulator of Notch signaling pathway. Shuttles between the cytoplasm and the nucleus and mediates the nuclear export of RBPJ/RBPSUH, thereby preventing the interaction between RBPJ/RBPSUH and NICD product of Notch proteins (Notch intracellular domain), leading to down-regulate Notch-mediated transcription. May play a role in neurogenesis. The sequence is that of RBPJ-interacting and tubulin-associated protein 1 (RITA1) from Homo sapiens (Human).